A 499-amino-acid chain; its full sequence is Glycerol kinase (499 aa).

An ADP-binding site is contributed by Thr13. ATP contacts are provided by Thr13, Thr14, and Ser15. A sn-glycerol 3-phosphate-binding site is contributed by Thr13. Position 17 (Arg17) interacts with ADP. The sn-glycerol 3-phosphate site is built by Arg83, Glu84, Tyr135, and Asp245. Glycerol is bound by residues Arg83, Glu84, Tyr135, Asp245, and Gln246. The ADP site is built by Thr267 and Gly310. Positions 267, 310, 314, and 411 each coordinate ATP. Residues Gly411 and Asn415 each coordinate ADP.

Belongs to the FGGY kinase family.

The catalysed reaction is glycerol + ATP = sn-glycerol 3-phosphate + ADP + H(+). It participates in polyol metabolism; glycerol degradation via glycerol kinase pathway; sn-glycerol 3-phosphate from glycerol: step 1/1. Inhibited by fructose 1,6-bisphosphate (FBP). Key enzyme in the regulation of glycerol uptake and metabolism. Catalyzes the phosphorylation of glycerol to yield sn-glycerol 3-phosphate. This is Glycerol kinase from Xanthomonas axonopodis pv. citri (strain 306).